A 245-amino-acid polypeptide reads, in one-letter code: Probable transcriptional regulatory protein CPR_1922 (245 aa).

It belongs to the TACO1 family.

Its subcellular location is the cytoplasm. This chain is Probable transcriptional regulatory protein CPR_1922, found in Clostridium perfringens (strain SM101 / Type A).